Consider the following 525-residue polypeptide: Glutamate--cysteine ligase (525 aa).

This sequence belongs to the glutamate--cysteine ligase type 1 family. Type 1 subfamily.

The catalysed reaction is L-cysteine + L-glutamate + ATP = gamma-L-glutamyl-L-cysteine + ADP + phosphate + H(+). It functions in the pathway sulfur metabolism; glutathione biosynthesis; glutathione from L-cysteine and L-glutamate: step 1/2. The polypeptide is Glutamate--cysteine ligase (Pseudomonas putida (strain ATCC 47054 / DSM 6125 / CFBP 8728 / NCIMB 11950 / KT2440)).